Reading from the N-terminus, the 138-residue chain is Translation initiation factor 5A (138 aa).

The residue at position 37 (K37) is a Hypusine.

The protein belongs to the eIF-5A family.

It localises to the cytoplasm. Functions by promoting the formation of the first peptide bond. This Pyrococcus horikoshii (strain ATCC 700860 / DSM 12428 / JCM 9974 / NBRC 100139 / OT-3) protein is Translation initiation factor 5A (eif5a).